The primary structure comprises 28 residues: Endoglucanase (28 aa).

Glutamate 20 acts as the Nucleophile in catalysis.

It belongs to the glycosyl hydrolase 5 (cellulase A) family.

The protein localises to the cell membrane. It catalyses the reaction Endohydrolysis of (1-&gt;4)-beta-D-glucosidic linkages in cellulose, lichenin and cereal beta-D-glucans.. This chain is Endoglucanase, found in Schizophyllum commune (Split gill fungus).